The primary structure comprises 364 residues: Putative apoptosis inhibitor ORF42 (364 aa).

Residues 24–89 (RLATFRGYEY…CREGVVSAPQ (66 aa)) form a BIR 1 repeat. Positions 83-126 (GVVSAPQQQPPPPPSTSIGAVGGDPRPEDMNVPERGWDPPMSKD) are disordered. A compositionally biased stretch (basic and acidic residues) spans 117 to 126 (RGWDPPMSKD). BIR repeat units lie at residues 127–193 (PKST…PLVV) and 236–300 (RIAS…ANMA). The segment at 315-350 (CVICLGAKADTILKPCLHYSLCYGCSTQVQKCPLCR) adopts an RING-type zinc-finger fold.

Functionally, may act as an apoptosis inhibitor. The polypeptide is Putative apoptosis inhibitor ORF42 (Magallana gigas (Pacific oyster)).